The sequence spans 559 residues: Glucans biosynthesis protein G (559 aa).

Residues 1–37 (MVSLLSCGTSASSHIVKKALTRLSLAMAAGLCFNLAA) form the signal peptide.

This sequence belongs to the OpgD/OpgG family.

The protein localises to the periplasm. It functions in the pathway glycan metabolism; osmoregulated periplasmic glucan (OPG) biosynthesis. Functionally, involved in the biosynthesis of osmoregulated periplasmic glucans (OPGs). This Shewanella frigidimarina (strain NCIMB 400) protein is Glucans biosynthesis protein G.